The primary structure comprises 242 residues: Uroporphyrinogen-III C-methyltransferase (242 aa).

Residues proline 12, 88–90 (GGD), 118–119 (TS), and methionine 170 contribute to the S-adenosyl-L-homocysteine site.

This sequence belongs to the precorrin methyltransferase family. In terms of assembly, homodimer.

The catalysed reaction is uroporphyrinogen III + 2 S-adenosyl-L-methionine = precorrin-2 + 2 S-adenosyl-L-homocysteine + H(+). Its pathway is cofactor biosynthesis; adenosylcobalamin biosynthesis; precorrin-2 from uroporphyrinogen III: step 1/1. In terms of biological role, catalyzes the two successive C-2 and C-7 methylation reactions involved in the conversion of uroporphyrinogen III to precorrin-2 via the intermediate formation of precorrin-1. It is a step in the biosynthesis of both cobalamin (vitamin B12) and coenzyme F430. The polypeptide is Uroporphyrinogen-III C-methyltransferase (cobA) (Methanocaldococcus jannaschii (strain ATCC 43067 / DSM 2661 / JAL-1 / JCM 10045 / NBRC 100440) (Methanococcus jannaschii)).